We begin with the raw amino-acid sequence, 283 residues long: Isochorismatase domain-containing protein 1 (283 aa).

It belongs to the isochorismatase family.

This is Isochorismatase domain-containing protein 1 (isoc1) from Salmo salar (Atlantic salmon).